Here is a 296-residue protein sequence, read N- to C-terminus: SPbeta prophage-derived endonuclease YokF (296 aa).

The N-terminal stretch at 1-19 is a signal peptide; it reads MKKVLLGFAAFTLSLSLAA. Residue cysteine 20 is the site of N-palmitoyl cysteine attachment. Cysteine 20 is lipidated: S-diacylglycerol cysteine. Residues 20-65 are disordered; the sequence is CSSNDSEKVSTEKETPQASTDVEKKTEQKESTKEKTADKSKEKDKK. Over residues 24–65 the composition is skewed to basic and acidic residues; it reads DSEKVSTEKETPQASTDVEKKTEQKESTKEKTADKSKEKDKK. One can recognise a TNase-like domain in the interval 66–199; the sequence is ELVDVTLDRA…KSEKLSIWSK (134 aa). Aspartate 79 is a binding site for Ca(2+). The active site involves arginine 93. Aspartate 98 and threonine 99 together coordinate Ca(2+). Active-site residues include glutamate 101 and arginine 144. The segment at 218–296 is disordered; sequence AVKKATTSKP…RDHDNYACER (79 aa). A compositionally biased stretch (low complexity) spans 219–244; sequence VKKATTSKPAATQPTTPKASSETSTT. Residues 284–296 are compositionally biased toward basic and acidic residues; sequence KMDRDHDNYACER.

Ca(2+) is required as a cofactor. Requires Cu(2+) as cofactor. Mn(2+) serves as cofactor.

Its subcellular location is the cell membrane. Its activity is regulated as follows. Inhibited by aurintricalboxylic acid but not by Zn(2+), Mn(2+), Hg(2+), 2-mercaptoethanol and sodium citrate. Neither inhibited nor activated by ATP. In terms of biological role, catalyzes the hydrolysis of supercoiled double and single strand DNA and RNA. Involved in chromosomal DNA degradation and cell death caused by thermal stress. The polypeptide is SPbeta prophage-derived endonuclease YokF (yokF) (Bacillus subtilis (strain 168)).